Here is a 288-residue protein sequence, read N- to C-terminus: Undecaprenyl-diphosphatase (288 aa).

The next 8 membrane-spanning stretches (helical) occupy residues 11–31 (LDLW…FLPI), 49–69 (PGVA…LSYF), 94–114 (AQMG…GLLI), 129–149 (LAAI…AEQL), 159–179 (LRLA…IPGV), 199–219 (AARF…LVEL), 234–254 (VLAI…AWLL), and 265–285 (FVVY…TGTL).

The protein belongs to the UppP family.

It is found in the cell inner membrane. The enzyme catalyses di-trans,octa-cis-undecaprenyl diphosphate + H2O = di-trans,octa-cis-undecaprenyl phosphate + phosphate + H(+). In terms of biological role, catalyzes the dephosphorylation of undecaprenyl diphosphate (UPP). Confers resistance to bacitracin. This is Undecaprenyl-diphosphatase from Synechococcus elongatus (strain ATCC 33912 / PCC 7942 / FACHB-805) (Anacystis nidulans R2).